Consider the following 485-residue polypeptide: CUGBP Elav-like family member 5 (485 aa).

Positions 1 to 11 (MARLTESEARR) are enriched in basic and acidic residues. A disordered region spans residues 1–40 (MARLTESEARRQQQQLLQPRPSPVGSSGPEPPGGQPDGMK). The segment covering 12-28 (QQQQLLQPRPSPVGSSG) has biased composition (low complexity). 3 consecutive RRM domains span residues 45–126 (IKLF…PADS), 134–214 (RKLF…FADT), and 400–478 (CNLF…LKRP).

It belongs to the CELF/BRUNOL family. As to expression, expressed in brain.

Its subcellular location is the nucleus. It localises to the cytoplasm. RNA-binding protein implicated in the regulation of pre-mRNA alternative splicing. Mediates exon inclusion and/or exclusion in pre-mRNA that are subject to tissue-specific and developmentally regulated alternative splicing. Specifically activates exon 5 inclusion of cardiac isoforms of TNNT2 during heart remodeling at the juvenile to adult transition. Binds to muscle-specific splicing enhancer (MSE) intronic sites flanking the alternative exon 5 of TNNT2 pre-mRNA. This is CUGBP Elav-like family member 5 (CELF5) from Homo sapiens (Human).